An 84-amino-acid polypeptide reads, in one-letter code: Toxin Aah4 (84 aa).

Residues 1 to 19 form the signal peptide; that stretch reads MNYLIMFSLALLLVIGVES. Positions 21 to 82 constitute an LCN-type CS-alpha/beta domain; it reads RDGYIVDSKN…PIKDPSDDCH (62 aa). 4 disulfide bridges follow: Cys-31–Cys-81, Cys-35–Cys-53, Cys-39–Cys-63, and Cys-43–Cys-65. A propeptide (removed by a carboxypeptidase) is located at residue Arg-84.

It belongs to the long (4 C-C) scorpion toxin superfamily. Sodium channel inhibitor family. Alpha subfamily. Expressed by the venom gland.

The protein resides in the secreted. Functionally, alpha toxins bind voltage-independently at site-3 of sodium channels (Nav) and inhibit the inactivation of the activated channels, thereby blocking neuronal transmission. This toxin seems to specifically act on Nav1.6/SCN8A sodium channel. In vitro, it inhibits the proliferation of the prostate cancer cell line DU145 (IC(50)=15 uM). It shows low effect on the adhesion of DU145 cells to fibronectin (at 15 uM) and is inactive on DU145 cells migration. In Androctonus australis (Sahara scorpion), this protein is Toxin Aah4.